The following is a 236-amino-acid chain: H2HPP isomerase (236 aa).

2 consecutive Cupin type-2 domains span residues 40 to 106 and 151 to 215; these read YVPP…AIDI and NIPG…SKSV. Residues His-50, His-52, Gln-56, His-91, His-162, His-164, Gln-168, and His-202 each coordinate a divalent metal cation. Residue Tyr-223 coordinates substrate.

Monomer. Fe(2+) is required as a cofactor. Co(2+) serves as cofactor.

It is found in the cytoplasm. The enzyme catalyses 3-[(4R)-4-hydroxycyclohexa-1,5-dien-1-yl]-2-oxopropanoate = 3-[(1E,4R)-4-hydroxycyclohex-2-en-1-ylidene]pyruvate. The protein operates within antibiotic biosynthesis; bacilysin biosynthesis. Part of the bacABCDEF operon responsible for the biosynthesis of the nonribosomally synthesized dipeptide antibiotic bacilysin, composed of L-alanine and L-anticapsin. Bacilysin is an irreversible inactivator of the glutaminase domain of glucosamine synthetase. BacB catalyzes the allylic isomerization of the endocyclic-delta(4),delta(8)-7R-dihydro-hydroxyphenylpyruvate (en-H2HPP) to generate a mixture of 3E,7R- and 3Z, 7R-olefins of the exocyclic-delta(3),delta(5)-dihydro-hydroxyphenylpyruvate (ex-H2HPP). The sequence is that of H2HPP isomerase from Bacillus amyloliquefaciens (Bacillus velezensis).